The sequence spans 155 residues: Catabolic 3-dehydroquinase (155 aa).

Tyr24 serves as the catalytic Proton acceptor. Substrate is bound by residues Asn75, His81, and Asp88. His101 serves as the catalytic Proton donor. Substrate contacts are provided by residues 102-103 (VS) and Arg112.

Belongs to the type-II 3-dehydroquinase family. As to quaternary structure, homododecamer. Adopts a ring-like structure, composed of an arrangement of two hexameric rings stacked on top of one another.

The catalysed reaction is 3-dehydroquinate = 3-dehydroshikimate + H2O. The protein operates within aromatic compound metabolism; 3,4-dihydroxybenzoate biosynthesis; 3,4-dihydroxybenzoate from 3-dehydroquinate: step 1/2. Its function is as follows. Is involved in the catabolism of quinate. Allows the utilization of quinate as carbon source via the beta-ketoadipate pathway. The sequence is that of Catabolic 3-dehydroquinase from Penicillium rubens (strain ATCC 28089 / DSM 1075 / NRRL 1951 / Wisconsin 54-1255) (Penicillium chrysogenum).